The primary structure comprises 224 residues: uncharacterized protein (224 aa).

The next 5 membrane-spanning stretches (helical) occupy residues I32 to V52, L60 to F80, I100 to G120, A130 to F150, and L162 to I182.

This sequence belongs to the derlin family.

It localises to the endoplasmic reticulum membrane. This is an uncharacterized protein from Schizosaccharomyces pombe (strain 972 / ATCC 24843) (Fission yeast).